A 131-amino-acid polypeptide reads, in one-letter code: Large ribosomal subunit protein bL17 (131 aa).

It belongs to the bacterial ribosomal protein bL17 family. As to quaternary structure, part of the 50S ribosomal subunit. Contacts protein L32.

This chain is Large ribosomal subunit protein bL17, found in Cupriavidus necator (strain ATCC 17699 / DSM 428 / KCTC 22496 / NCIMB 10442 / H16 / Stanier 337) (Ralstonia eutropha).